Reading from the N-terminus, the 169-residue chain is Probable inosine/xanthosine triphosphatase (169 aa).

Substrate is bound at residue 7-12; sequence STNKAK. Glutamate 35 lines the Mg(2+) pocket.

Belongs to the YjjX NTPase family. Homodimer. The cofactor is Mg(2+). Mn(2+) is required as a cofactor.

It catalyses the reaction XTP + H2O = XDP + phosphate + H(+). It carries out the reaction ITP + H2O = IDP + phosphate + H(+). Its function is as follows. Phosphatase that hydrolyzes non-canonical purine nucleotides such as XTP and ITP to their respective diphosphate derivatives. Probably excludes non-canonical purines from DNA/RNA precursor pool, thus preventing their incorporation into DNA/RNA and avoiding chromosomal lesions. The polypeptide is Probable inosine/xanthosine triphosphatase (Sulfurisphaera tokodaii (strain DSM 16993 / JCM 10545 / NBRC 100140 / 7) (Sulfolobus tokodaii)).